Here is a 196-residue protein sequence, read N- to C-terminus: Probable DNA-directed RNA polymerase subunit delta (196 aa).

Residues 14-81 enclose the HTH HARE-type domain; the sequence is LSMIEVAHEI…GDNVWGLRSW (68 aa). Residues 119-150 are compositionally biased toward acidic residues; sequence DDDDVIDYDDDDPEDEDLDNDYDDEDDDDDEG. The tract at residues 119–196 is disordered; it reads DDDDVIDYDD…DADLDEENQD (78 aa). Residues 151–161 show a composition bias toward basic and acidic residues; that stretch reads SHELKQYTKDL. Composition is skewed to acidic residues over residues 162–176 and 186–196; these read DDID…ELAD and SDADLDEENQD.

Belongs to the RpoE family. As to quaternary structure, RNAP is composed of a core of 2 alpha, a beta and a beta' subunits. The core is associated with a delta subunit and one of several sigma factors.

In terms of biological role, participates in both the initiation and recycling phases of transcription. In the presence of the delta subunit, RNAP displays an increased specificity of transcription, a decreased affinity for nucleic acids, and an increased efficiency of RNA synthesis because of enhanced recycling. This Ligilactobacillus salivarius (strain UCC118) (Lactobacillus salivarius) protein is Probable DNA-directed RNA polymerase subunit delta.